The following is a 257-amino-acid chain: Acetylglutamate kinase (257 aa).

Residues 41–42 (GG), Arg63, and Asn158 each bind substrate.

This sequence belongs to the acetylglutamate kinase family. ArgB subfamily.

The protein resides in the cytoplasm. The enzyme catalyses N-acetyl-L-glutamate + ATP = N-acetyl-L-glutamyl 5-phosphate + ADP. The protein operates within amino-acid biosynthesis; L-arginine biosynthesis; N(2)-acetyl-L-ornithine from L-glutamate: step 2/4. In terms of biological role, catalyzes the ATP-dependent phosphorylation of N-acetyl-L-glutamate. This Phocaeicola vulgatus (strain ATCC 8482 / DSM 1447 / JCM 5826 / CCUG 4940 / NBRC 14291 / NCTC 11154) (Bacteroides vulgatus) protein is Acetylglutamate kinase.